The sequence spans 274 residues: ATP synthase subunit b 2 (274 aa).

Residues 2–22 form a helical membrane-spanning segment; the sequence is HIDWFVLLAQLVNFLILIYLL.

It belongs to the ATPase B chain family. F-type ATPases have 2 components, F(1) - the catalytic core - and F(0) - the membrane proton channel. F(1) has five subunits: alpha(3), beta(3), gamma(1), delta(1), epsilon(1). F(0) has three main subunits: a(1), b(2) and c(10-14). The alpha and beta chains form an alternating ring which encloses part of the gamma chain. F(1) is attached to F(0) by a central stalk formed by the gamma and epsilon chains, while a peripheral stalk is formed by the delta and b chains.

The protein resides in the cell inner membrane. In terms of biological role, f(1)F(0) ATP synthase produces ATP from ADP in the presence of a proton or sodium gradient. F-type ATPases consist of two structural domains, F(1) containing the extramembraneous catalytic core and F(0) containing the membrane proton channel, linked together by a central stalk and a peripheral stalk. During catalysis, ATP synthesis in the catalytic domain of F(1) is coupled via a rotary mechanism of the central stalk subunits to proton translocation. Its function is as follows. Component of the F(0) channel, it forms part of the peripheral stalk, linking F(1) to F(0). This Syntrophus aciditrophicus (strain SB) protein is ATP synthase subunit b 2.